The chain runs to 238 residues: Ribonuclease 3 (238 aa).

The RNase III domain occupies 8 to 135 (VAELERRIGY…LIAALYIDGG (128 aa)). E48 contributes to the Mg(2+) binding site. D52 is an active-site residue. 2 residues coordinate Mg(2+): D121 and E124. The active site involves E124. Residues 161–230 (DPKTQLQEWV…AQCMLLKREG (70 aa)) enclose the DRBM domain.

The protein belongs to the ribonuclease III family. Homodimer. Mg(2+) is required as a cofactor.

It is found in the cytoplasm. The enzyme catalyses Endonucleolytic cleavage to 5'-phosphomonoester.. Digests double-stranded RNA. Involved in the processing of primary rRNA transcript to yield the immediate precursors to the large and small rRNAs (23S and 16S). Processes some mRNAs, and tRNAs when they are encoded in the rRNA operon. Processes pre-crRNA and tracrRNA of type II CRISPR loci if present in the organism. In Phenylobacterium zucineum (strain HLK1), this protein is Ribonuclease 3.